We begin with the raw amino-acid sequence, 203 residues long: Reticulon-like protein B12 (203 aa).

In terms of domain architecture, Reticulon spans Val24 to Ser203. 3 helical membrane passes run Asn34 to Ala54, Tyr55 to Trp75, and Val132 to Cys152.

The protein localises to the endoplasmic reticulum membrane. The polypeptide is Reticulon-like protein B12 (RTNLB12) (Arabidopsis thaliana (Mouse-ear cress)).